A 451-amino-acid chain; its full sequence is Phosphoglucosamine mutase (451 aa).

The Phosphoserine intermediate role is filled by S102. 4 residues coordinate Mg(2+): S102, D243, D245, and D247. S102 carries the post-translational modification Phosphoserine.

This sequence belongs to the phosphohexose mutase family. The cofactor is Mg(2+). In terms of processing, activated by phosphorylation.

It carries out the reaction alpha-D-glucosamine 1-phosphate = D-glucosamine 6-phosphate. In terms of biological role, catalyzes the conversion of glucosamine-6-phosphate to glucosamine-1-phosphate. The sequence is that of Phosphoglucosamine mutase from Chelativorans sp. (strain BNC1).